The sequence spans 595 residues: MKNIRNFCIIAHIDHGKSTLADRLLEYTNTVSGKDLQDQVLDNMDLERERGITIKSHAIQMDYEMDGEKYVLNLIDTPGHVDFSYEVSRSIAACEGALLIVDAAQGIQAQTISNLYMAIENDLTIIPIVNKVDLPSAMPEEVEDQIIELLGCDRSEIIRASGKTGQGVDQILRAIVEQVPAPAGDPDAPLQCLIFDSVFNPFRGIIAYFKVVNGSIRKGDHVKFIATEKEYDADEVGVLRLDMEPRSEVKTGDVGYIISGIKTSREVKVGDTITHVAKPAKEAIAGFEEVKPMVFAGVYPIEAEDFENLRASLEKLQLNDASLTFQPESSVALGFGFRCGFLGLLHMEIVQERLDREFNMNVITTVPNVSYKVYDKKGGCKEVHNPSGLLEPTLIDHIEEPFIRASVITNTAYIGPIMTLCLGKRGVLVKQEYISGDRVEIFYDLPLGEIVIDFYDKLKSISKGYASFDYHLHDFRESKLVKLDILLNGEPVDALSTLTHVDNSVTFGRRMCEKLKELIPRQQFEIAIQAAIGAKIIARETIKPVRKDVTAKCYGGDISRKRKLLEKQKEGKKRMKQIGTVEVPQKAFLAVLKLD.

Residues 2-183 enclose the tr-type G domain; sequence KNIRNFCIIA…AIVEQVPAPA (182 aa). Residues 14–19 and 130–133 each bind GTP; these read DHGKST and NKVD.

It belongs to the TRAFAC class translation factor GTPase superfamily. Classic translation factor GTPase family. LepA subfamily.

The protein localises to the cell inner membrane. It carries out the reaction GTP + H2O = GDP + phosphate + H(+). Its function is as follows. Required for accurate and efficient protein synthesis under certain stress conditions. May act as a fidelity factor of the translation reaction, by catalyzing a one-codon backward translocation of tRNAs on improperly translocated ribosomes. Back-translocation proceeds from a post-translocation (POST) complex to a pre-translocation (PRE) complex, thus giving elongation factor G a second chance to translocate the tRNAs correctly. Binds to ribosomes in a GTP-dependent manner. The protein is Elongation factor 4 of Porphyromonas gingivalis (strain ATCC BAA-308 / W83).